The following is a 177-amino-acid chain: Large ribosomal subunit protein uL6 (177 aa).

At lysine 44 the chain carries N6-acetyllysine.

Belongs to the universal ribosomal protein uL6 family. Part of the 50S ribosomal subunit.

This protein binds to the 23S rRNA, and is important in its secondary structure. It is located near the subunit interface in the base of the L7/L12 stalk, and near the tRNA binding site of the peptidyltransferase center. In Escherichia coli O139:H28 (strain E24377A / ETEC), this protein is Large ribosomal subunit protein uL6.